The sequence spans 706 residues: Protein argonaute (706 aa).

The N-terminal domain stretch occupies residues 1-108 (MGKEALLNLY…ELFRDFLTKT (108 aa)). The interval 109–165 (KVKDKFISDFYKKFRDKITVQGKNRKIALIPEVNEKVLKSEEGYFLLHLDLKFRIQP) is linker L1. Positions 168–259 (TLQTLLERND…YPATILKPVL (92 aa)) constitute a PAZ domain. The tract at residues 263–334 (NLEDEERNEV…AKGKNTKVIT (72 aa)) is linker L2. A mid domain region spans residues 335–448 (NLRKFLELCR…YDFVKRELLK (114 aa)). The Piwi domain occupies 419-694 (LVIVFLEEYP…ITKLMLRGIE (276 aa)). The segment at 449-706 (KMIPSQVILN…KKEGDIMYWL (258 aa)) is PIWI domain. Active-site residues include aspartate 502, glutamate 541, and aspartate 571. Aspartate 502 provides a ligand contact to Mn(2+). Position 571 (aspartate 571) interacts with Mn(2+). Residues 612-650 (FIKGYFYKLSEDSVILATYNQVYEGTHQPIKVRKVYGEL) are PIWI box. Aspartate 683 is a catalytic residue. Aspartate 683 is a binding site for Mn(2+).

It belongs to the argonaute family. Long pAgo subfamily. It depends on Mg(2+) as a cofactor.

In terms of biological role, a DNA-guided RNA endonuclease. Uses short ssDNA sequences as guides (gDNA) to bind complementary target strands, resulting in cleavage of the target RNA. The cleavage site is 10 nucleotides downstream of the residue base paired with the 5'-end of the gDNA. Binds ssDNA better than ssRNA, binds dsDNA and DNA-RNA hybrids but does not bind dsRNA. A 2 nucleotide 3'-overhang (possibly on the guide strand) may help load nucleic acids into the complex. In Aquifex aeolicus (strain VF5), this protein is Protein argonaute.